The primary structure comprises 378 residues: Odorant receptor 33a (378 aa).

Residues 1-33 (MDSRRKVRSENLYKTYWLYWRLLGVEGDYPFRR) are Cytoplasmic-facing. Residues 34 to 54 (LVDFTITSFITILFPVHLILG) form a helical membrane-spanning segment. Over 55–62 (MYKKPQIQ) the chain is Extracellular. A helical transmembrane segment spans residues 63–83 (VFRSLHFTSECLFCSYKFFCF). Residues 84–127 (RWKLKEIKTIEGLLQDLDSRVESEEERNYFNQNPSRVARMLSKS) are Cytoplasmic-facing. Residues 128–148 (YLVAAISAIITATVAGLFSTG) traverse the membrane as a helical segment. Residues 149-163 (RNLMYLGWFPYDFQA) lie on the Extracellular side of the membrane. The helical transmembrane segment at 164–184 (TAAIYWISFSYQAIGSSLLIL) threads the bilayer. Topologically, residues 185–254 (ENLANDSYPP…LLRSTLHLSQ (70 aa)) are cytoplasmic. A helical membrane pass occupies residues 255 to 275 (LGQFLSSGINISITLINILFF). The Extracellular portion of the chain corresponds to 276–285 (AENNFAMLYY). The chain crosses the membrane as a helical span at residues 286–306 (AVFFAAMLIELFPSCYYGILM). The Cytoplasmic portion of the chain corresponds to 307–355 (TMEFDKLPYAIFSSNWLKMDKRYNRSLIILMQLTLVPVNIKAGGIVGID). Residues 356 to 376 (MSAFFATVRMAYSFYTLALSF) traverse the membrane as a helical segment. Residues 377–378 (RV) are Extracellular-facing.

It belongs to the insect chemoreceptor superfamily. Heteromeric odorant receptor channel (TC 1.A.69) family. Or2a subfamily. As to quaternary structure, interacts with Orco. Complexes exist early in the endomembrane system in olfactory sensory neurons (OSNs), coupling these complexes to the conserved ciliary trafficking pathway. As to expression, expressed in 1-2 cells on the distal edge of the antenna but not the maxillary palp.

The protein resides in the cell membrane. Functionally, odorant receptor which mediates acceptance or avoidance behavior, depending on its substrates. The odorant receptor repertoire encodes a large collection of odor stimuli that vary widely in identity, intensity, and duration. May form a complex with Orco to form odorant-sensing units, providing sensitive and prolonged odorant signaling and calcium permeability. The protein is Odorant receptor 33a (Or33a) of Drosophila melanogaster (Fruit fly).